We begin with the raw amino-acid sequence, 387 residues long: Putative acid--amine ligase YjfC (387 aa).

Position 101 to 103 (101 to 103) interacts with ATP; the sequence is RMD. Asp-103, Glu-116, and Asn-118 together coordinate Mg(2+). ATP contacts are provided by residues Lys-265, Lys-302, Gly-309, Gln-337, and 372 to 374; that span reads LIT.

Belongs to the glutathionylspermidine synthase preATP-grasp family.

In terms of biological role, may be a ligase forming an amide bond. Shows ATPase activity. Despite its similarity to the C-terminal synthetase domain of Gss, is not a glutathionylspermidine (Gsp) synthetase. Cannot synthesize Gsp, glutathione (GSH), or GSH intermediates, from GSH and spermidine, cysteine and glutamate, gamma-glutamylcysteine and spermidine, and gamma-glutamylcysteine and glycine. Does not bind to Gsp. The protein is Putative acid--amine ligase YjfC (yjfC) of Escherichia coli (strain K12).